The sequence spans 379 residues: Anhydro-N-acetylmuramic acid kinase (379 aa).

ATP is bound at residue 9-16 (GTSADGVD).

The protein belongs to the anhydro-N-acetylmuramic acid kinase family.

The catalysed reaction is 1,6-anhydro-N-acetyl-beta-muramate + ATP + H2O = N-acetyl-D-muramate 6-phosphate + ADP + H(+). It participates in amino-sugar metabolism; 1,6-anhydro-N-acetylmuramate degradation. Its pathway is cell wall biogenesis; peptidoglycan recycling. In terms of biological role, catalyzes the specific phosphorylation of 1,6-anhydro-N-acetylmuramic acid (anhMurNAc) with the simultaneous cleavage of the 1,6-anhydro ring, generating MurNAc-6-P. Is required for the utilization of anhMurNAc either imported from the medium or derived from its own cell wall murein, and thus plays a role in cell wall recycling. This is Anhydro-N-acetylmuramic acid kinase from Prochlorococcus marinus (strain MIT 9303).